The sequence spans 1006 residues: Transcription factor tau subunit sfc4 (1006 aa).

Residues 64 to 91 form a disordered region; that stretch reads GLWSDEESDYEGSDDESNFSKTASRTED. Over residues 66–80 the composition is skewed to acidic residues; sequence WSDEESDYEGSDDES. TPR repeat units follow at residues 133 to 166, 205 to 238, 277 to 310, 396 to 429, 431 to 464, and 466 to 499; these read QQMLSLANHLFAQEGNFDEAQKLAEEIVRIDNNV, HELWFTCAKLSESLEFWDQADYCYNRAVSAKPPN, ASILKNLAEIYIKIHAPREILKQFEIAWKYFYQY, HLFRTKLGIARLKTGELPEAELHFSVIKNLPPDY, WGMLYDIAKAYMDIERLDLALEYFVLICNHEPAQ, and IGLWYNMGVCYLELKEYEHAQQCMEAILIVDNSN. Positions 506-554 form a coiled coil; that stretch reads LAEINELQDNRDAALEIVTNIFEQRRNINELEREQSQNEDHEKNVGSQL. TPR repeat units follow at residues 841 to 874 and 924 to 957; these read PVLVLLYGHIMARNRSWIPAINYYSRAFAINPDC and QEALYNLGKAYHFIGLEHYAVKYYEAVLGLSPMS.

Component of the TFIIIC complex including sfc1, sfc3, sfc4, sfc6 and sfc7. The subunits are organized in two globular domains, tauA and tauB, connected by a proteolysis-sensitive and flexible linker. Interacts with sfc1, sfc3 and sfc6. Phosphorylated.

Its subcellular location is the nucleus. In terms of biological role, TFIIIC mediates tRNA and 5S RNA gene activation by binding to intragenic promoter elements. Upstream of the transcription start site, TFIIIC assembles the initiation complex TFIIIB-TFIIIC-tDNA, which is sufficient for RNA polymerase III recruitment and function. Part of the tauA domain of TFIIIC that binds boxA DNA promoter sites of tRNA and similar genes. Sfc4 is the TFIIIB assembling subunit of TFIIIC. This chain is Transcription factor tau subunit sfc4, found in Schizosaccharomyces pombe (strain 972 / ATCC 24843) (Fission yeast).